A 464-amino-acid chain; its full sequence is Chitobiosyldiphosphodolichol beta-mannosyltransferase (464 aa).

Over 1–2 (MA) the chain is Lumenal. A helical membrane pass occupies residues 3 to 23 (ASCLVLLALCLLLPLLLLGGW). The Cytoplasmic segment spans residues 24–99 (KRWRRGRTAR…ELQSLAVGPR (76 aa)). Positions 100–120 (VFQYGVKVVFQAMYLLWKLMW) form an intramembrane region, helical. The Cytoplasmic portion of the chain corresponds to 121 to 464 (REPGAYIFLQ…QTVLPLVMDT (344 aa)). S242 is modified (phosphoserine). Residues 242–261 (SPFRARSEPEDPATERSAFT) form a disordered region.

This sequence belongs to the glycosyltransferase group 1 family. Glycosyltransferase 33 subfamily.

It is found in the endoplasmic reticulum membrane. It catalyses the reaction an N,N'-diacetylchitobiosyl-diphospho-di-trans,poly-cis-dolichol + GDP-alpha-D-mannose = a beta-D-Man-(1-&gt;4)-beta-D-GlcNAc-(1-&gt;4)-alpha-D-GlcNAc-diphospho-di-trans,poly-cis-dolichol + GDP + H(+). It functions in the pathway protein modification; protein glycosylation. In terms of biological role, mannosyltransferase that operates in the biosynthetic pathway of dolichol-linked oligosaccharides, the glycan precursors employed in protein asparagine (N)-glycosylation. The assembly of dolichol-linked oligosaccharides begins on the cytosolic side of the endoplasmic reticulum membrane and finishes in its lumen. The sequential addition of sugars to dolichol pyrophosphate produces dolichol-linked oligosaccharides containing fourteen sugars, including two GlcNAcs, nine mannoses and three glucoses. Once assembled, the oligosaccharide is transferred from the lipid to nascent proteins by oligosaccharyltransferases. Catalyzes, on the cytoplasmic face of the endoplasmic reticulum, the addition of the first mannose residues to the dolichol-linked oligosaccharide chain, to produce Man1GlcNAc(2)-PP-dolichol core oligosaccharide. Man1GlcNAc(2)-PP-dolichol is a substrate for ALG2, the following enzyme in the biosynthetic pathway. In Pongo abelii (Sumatran orangutan), this protein is Chitobiosyldiphosphodolichol beta-mannosyltransferase.